The sequence spans 701 residues: Ribosomal RNA large subunit methyltransferase K/L (701 aa).

The THUMP domain occupies 43 to 154 (LLYQSLMWSR…KETAHISLDL (112 aa)).

Belongs to the methyltransferase superfamily. RlmKL family.

It localises to the cytoplasm. The catalysed reaction is guanosine(2445) in 23S rRNA + S-adenosyl-L-methionine = N(2)-methylguanosine(2445) in 23S rRNA + S-adenosyl-L-homocysteine + H(+). It carries out the reaction guanosine(2069) in 23S rRNA + S-adenosyl-L-methionine = N(2)-methylguanosine(2069) in 23S rRNA + S-adenosyl-L-homocysteine + H(+). In terms of biological role, specifically methylates the guanine in position 2445 (m2G2445) and the guanine in position 2069 (m7G2069) of 23S rRNA. The chain is Ribosomal RNA large subunit methyltransferase K/L from Klebsiella pneumoniae (strain 342).